Reading from the N-terminus, the 236-residue chain is Ubiquinone biosynthesis O-methyltransferase (236 aa).

Positions 39, 59, 80, and 124 each coordinate S-adenosyl-L-methionine.

It belongs to the methyltransferase superfamily. UbiG/COQ3 family.

The enzyme catalyses a 3-demethylubiquinol + S-adenosyl-L-methionine = a ubiquinol + S-adenosyl-L-homocysteine + H(+). The catalysed reaction is a 3-(all-trans-polyprenyl)benzene-1,2-diol + S-adenosyl-L-methionine = a 2-methoxy-6-(all-trans-polyprenyl)phenol + S-adenosyl-L-homocysteine + H(+). It participates in cofactor biosynthesis; ubiquinone biosynthesis. Functionally, O-methyltransferase that catalyzes the 2 O-methylation steps in the ubiquinone biosynthetic pathway. The chain is Ubiquinone biosynthesis O-methyltransferase from Shewanella oneidensis (strain ATCC 700550 / JCM 31522 / CIP 106686 / LMG 19005 / NCIMB 14063 / MR-1).